A 163-amino-acid polypeptide reads, in one-letter code: 2-C-methyl-D-erythritol 2,4-cyclodiphosphate synthase (163 aa).

A divalent metal cation is bound by residues Asp-10 and His-12. 4-CDP-2-C-methyl-D-erythritol 2-phosphate is bound by residues 10–12 and 36–37; these read DVH and HS. A divalent metal cation is bound at residue His-44. 4-CDP-2-C-methyl-D-erythritol 2-phosphate is bound by residues 58 to 60, 63 to 67, 134 to 137, Phe-141, and Arg-144; these read DIG, FPDND, and TTTE.

Belongs to the IspF family. As to quaternary structure, homotrimer. The cofactor is a divalent metal cation.

It carries out the reaction 4-CDP-2-C-methyl-D-erythritol 2-phosphate = 2-C-methyl-D-erythritol 2,4-cyclic diphosphate + CMP. It functions in the pathway isoprenoid biosynthesis; isopentenyl diphosphate biosynthesis via DXP pathway; isopentenyl diphosphate from 1-deoxy-D-xylulose 5-phosphate: step 4/6. Its function is as follows. Involved in the biosynthesis of isopentenyl diphosphate (IPP) and dimethylallyl diphosphate (DMAPP), two major building blocks of isoprenoid compounds. Catalyzes the conversion of 4-diphosphocytidyl-2-C-methyl-D-erythritol 2-phosphate (CDP-ME2P) to 2-C-methyl-D-erythritol 2,4-cyclodiphosphate (ME-CPP) with a corresponding release of cytidine 5-monophosphate (CMP). This chain is 2-C-methyl-D-erythritol 2,4-cyclodiphosphate synthase, found in Carboxydothermus hydrogenoformans (strain ATCC BAA-161 / DSM 6008 / Z-2901).